A 664-amino-acid polypeptide reads, in one-letter code: Macoilin (664 aa).

4 consecutive transmembrane segments (helical) span residues 28 to 48 (TFLYLKFLVVWALVLLADFVL), 75 to 95 (AFSVFFVCVAFTSNIICLLFI), 120 to 140 (VCLPTVSLWILFVYIEAAIRF), and 154 to 174 (FAAHCIGYPVVTLGFGFKSYV). A compositionally biased stretch (basic and acidic residues) spans 253–265 (REKGKEKDKDAKK). Positions 253–274 (REKGKEKDKDAKKHNLGINNNN) are disordered. At Ser-305 the chain carries Phosphoserine. Polar residues predominate over residues 320–348 (KNYKNASGVVNSSPRSHSATNGSIPSSSS). A disordered region spans residues 320–367 (KNYKNASGVVNSSPRSHSATNGSIPSSSSKNEKKQKCTSKSPSAHKDL). Asn-324 carries an N-linked (GlcNAc...) asparagine glycan. At Ser-332 the chain carries Phosphoserine. N-linked (GlcNAc...) asparagine glycosylation is found at Asn-340 and Asn-452. Ser-631 and Ser-634 each carry phosphoserine. Positions 631-664 (SPLSPVSPHYSSKFVETSPSGLDPNASVYQPLKK) are disordered. An N-linked (GlcNAc...) asparagine glycan is attached at Asn-655.

It belongs to the macoilin family.

Its subcellular location is the rough endoplasmic reticulum membrane. It is found in the nucleus membrane. Its function is as follows. Plays a role in the regulation of neuronal activity. This chain is Macoilin (MACO1), found in Bos taurus (Bovine).